The following is a 315-amino-acid chain: Tyrosine recombinase XerC (315 aa).

The Core-binding (CB) domain maps to 1–103; that stretch reads MIASFYAFLD…AIKSFAKFCV (103 aa). In terms of domain architecture, Tyr recombinase spans 124 to 306; sequence ELPSPLTYEQ…SMKLKKQIHD (183 aa). Catalysis depends on residues Arg164, Lys188, His258, Arg261, and His284. The active-site O-(3'-phospho-DNA)-tyrosine intermediate is the Tyr293.

It belongs to the 'phage' integrase family. XerC subfamily. Forms a cyclic heterotetrameric complex composed of two molecules of XerC and two molecules of XerD.

The protein localises to the cytoplasm. Site-specific tyrosine recombinase, which acts by catalyzing the cutting and rejoining of the recombining DNA molecules. The XerC-XerD complex is essential to convert dimers of the bacterial chromosome into monomers to permit their segregation at cell division. It also contributes to the segregational stability of plasmids. This is Tyrosine recombinase XerC from Chlamydia muridarum (strain MoPn / Nigg).